The following is a 776-amino-acid chain: Kinesin-like protein KLP1 (776 aa).

The Kinesin motor domain occupies 5-335; the sequence is AVKVFVRTRP…LRFASRVRTL (331 aa). ATP is bound at residue 91 to 98; the sequence is GQTGAGKT. Positions 348-371 form a coiled coil; it reads ALLLRRYERQIKELKAELAMRDTL. A disordered region spans residues 441–535; the sequence is RRATEEGSGA…SNWGDAGPLS (95 aa). Residues 447 to 460 are compositionally biased toward low complexity; sequence GSGAAARGGDSAGP. Residues 579-657 are a coiled coil; the sequence is ALADTKASIR…SLKSAREELE (79 aa). A globular region spans residues 658–776; that stretch reads PQIQAVAVAR…TQAVNRGLAR (119 aa).

Belongs to the TRAFAC class myosin-kinesin ATPase superfamily. Kinesin family.

The protein resides in the cytoplasm. It localises to the cytoskeleton. It is found in the flagellum axoneme. In terms of biological role, may play a role in rotation or twisting of the central pair microtubules of the flagella axoneme. The chain is Kinesin-like protein KLP1 (KLP1) from Chlamydomonas reinhardtii (Chlamydomonas smithii).